Consider the following 337-residue polypeptide: Ketol-acid reductoisomerase (NADP(+)) (337 aa).

Positions 3–183 (VEMFYDDDAD…GGTRAGVIKT (181 aa)) constitute a KARI N-terminal Rossmann domain. Residues 26-29 (YGSQ), Lys49, Ser52, Ser54, and 84-87 (DTAQ) each bind NADP(+). His109 is a catalytic residue. Residue Gly135 coordinates NADP(+). The KARI C-terminal knotted domain maps to 184–329 (TFKEETETDL…KKLRDLMSWV (146 aa)). Residues Asp192, Glu196, Glu228, and Glu232 each contribute to the Mg(2+) site. Ser253 contributes to the substrate binding site.

This sequence belongs to the ketol-acid reductoisomerase family. Mg(2+) is required as a cofactor.

The enzyme catalyses (2R)-2,3-dihydroxy-3-methylbutanoate + NADP(+) = (2S)-2-acetolactate + NADPH + H(+). The catalysed reaction is (2R,3R)-2,3-dihydroxy-3-methylpentanoate + NADP(+) = (S)-2-ethyl-2-hydroxy-3-oxobutanoate + NADPH + H(+). It participates in amino-acid biosynthesis; L-isoleucine biosynthesis; L-isoleucine from 2-oxobutanoate: step 2/4. The protein operates within amino-acid biosynthesis; L-valine biosynthesis; L-valine from pyruvate: step 2/4. Functionally, involved in the biosynthesis of branched-chain amino acids (BCAA). Catalyzes an alkyl-migration followed by a ketol-acid reduction of (S)-2-acetolactate (S2AL) to yield (R)-2,3-dihydroxy-isovalerate. In the isomerase reaction, S2AL is rearranged via a Mg-dependent methyl migration to produce 3-hydroxy-3-methyl-2-ketobutyrate (HMKB). In the reductase reaction, this 2-ketoacid undergoes a metal-dependent reduction by NADPH to yield (R)-2,3-dihydroxy-isovalerate. This is Ketol-acid reductoisomerase (NADP(+)) from Rhodococcus jostii (strain RHA1).